The primary structure comprises 253 residues: tRNA-cytidine(32) 2-sulfurtransferase 2 (253 aa).

The PP-loop motif motif lies at 33–38 (SGGKDS). Positions 108, 111, and 199 each coordinate [4Fe-4S] cluster.

It belongs to the TtcA family. In terms of assembly, homodimer. It depends on Mg(2+) as a cofactor. [4Fe-4S] cluster serves as cofactor.

The protein resides in the cytoplasm. The enzyme catalyses cytidine(32) in tRNA + S-sulfanyl-L-cysteinyl-[cysteine desulfurase] + AH2 + ATP = 2-thiocytidine(32) in tRNA + L-cysteinyl-[cysteine desulfurase] + A + AMP + diphosphate + H(+). Its pathway is tRNA modification. Its function is as follows. Catalyzes the ATP-dependent 2-thiolation of cytidine in position 32 of tRNA, to form 2-thiocytidine (s(2)C32). The sulfur atoms are provided by the cysteine/cysteine desulfurase (IscS) system. This chain is tRNA-cytidine(32) 2-sulfurtransferase 2, found in Francisella tularensis subsp. novicida (strain U112).